Reading from the N-terminus, the 133-residue chain is Profilin (133 aa).

Belongs to the profilin family. In terms of assembly, interacts with host TPM1. Interacts with protein A25.

The protein localises to the host cytoplasm. Its function is as follows. Participates in either intracellular transport of viral proteins or intercellular spread of the virus. Cellular profilins modulate actin filament dynamics (polymerization and depolymerization) via direct binding to actin through an actin-binding domain as well as by modulation of other actin-binding proteins. In contrast to cellular homologs, the poxvirus profilins seem to bind actin only weakly. The protein is Profilin (OPG171) of Variola virus (isolate Human/India/Ind3/1967) (VARV).